A 398-amino-acid polypeptide reads, in one-letter code: UDP-N-acetylglucosamine--N-acetylmuramyl-(pentapeptide) pyrophosphoryl-undecaprenol N-acetylglucosamine transferase (398 aa).

UDP-N-acetyl-alpha-D-glucosamine-binding positions include 11-13, Asn-124, Arg-164, Ser-192, and Gln-318; that span reads TGG.

The protein belongs to the glycosyltransferase 28 family. MurG subfamily.

The protein localises to the cell membrane. The catalysed reaction is di-trans,octa-cis-undecaprenyl diphospho-N-acetyl-alpha-D-muramoyl-L-alanyl-D-glutamyl-meso-2,6-diaminopimeloyl-D-alanyl-D-alanine + UDP-N-acetyl-alpha-D-glucosamine = di-trans,octa-cis-undecaprenyl diphospho-[N-acetyl-alpha-D-glucosaminyl-(1-&gt;4)]-N-acetyl-alpha-D-muramoyl-L-alanyl-D-glutamyl-meso-2,6-diaminopimeloyl-D-alanyl-D-alanine + UDP + H(+). It participates in cell wall biogenesis; peptidoglycan biosynthesis. Its function is as follows. Cell wall formation. Catalyzes the transfer of a GlcNAc subunit on undecaprenyl-pyrophosphoryl-MurNAc-pentapeptide (lipid intermediate I) to form undecaprenyl-pyrophosphoryl-MurNAc-(pentapeptide)GlcNAc (lipid intermediate II). This is UDP-N-acetylglucosamine--N-acetylmuramyl-(pentapeptide) pyrophosphoryl-undecaprenol N-acetylglucosamine transferase from Deinococcus radiodurans (strain ATCC 13939 / DSM 20539 / JCM 16871 / CCUG 27074 / LMG 4051 / NBRC 15346 / NCIMB 9279 / VKM B-1422 / R1).